Consider the following 259-residue polypeptide: Deoxyribose-phosphate aldolase (259 aa).

Aspartate 102 acts as the Proton donor/acceptor in catalysis. Lysine 167 (schiff-base intermediate with acetaldehyde) is an active-site residue. Lysine 201 acts as the Proton donor/acceptor in catalysis.

The protein belongs to the DeoC/FbaB aldolase family. DeoC type 2 subfamily.

It localises to the cytoplasm. The enzyme catalyses 2-deoxy-D-ribose 5-phosphate = D-glyceraldehyde 3-phosphate + acetaldehyde. It functions in the pathway carbohydrate degradation; 2-deoxy-D-ribose 1-phosphate degradation; D-glyceraldehyde 3-phosphate and acetaldehyde from 2-deoxy-alpha-D-ribose 1-phosphate: step 2/2. Functionally, catalyzes a reversible aldol reaction between acetaldehyde and D-glyceraldehyde 3-phosphate to generate 2-deoxy-D-ribose 5-phosphate. This chain is Deoxyribose-phosphate aldolase, found in Serratia proteamaculans (strain 568).